The sequence spans 203 residues: Ras-related protein Rab5A (203 aa).

Gly-18–Ser-26 is a binding site for GTP. An Effector region motif is present at residues Gln-40 to Phe-48. GTP contacts are provided by residues Asp-66–Gln-70, Asn-124–Asp-127, and Ser-154–Ala-155. 2 S-geranylgeranyl cysteine lipidation sites follow: Cys-201 and Cys-202.

The protein belongs to the small GTPase superfamily. Rab family. As to quaternary structure, interacts with VPS9A. Interacts with NSF and RBP-L. Highly expressed in roots. Expressed at low levels in shoots, flowers and grains.

It is found in the prevacuolar compartment membrane. Its subcellular location is the golgi apparatus membrane. It localises to the cell membrane. The protein resides in the protein storage vacuole membrane. In terms of biological role, plays an important role in intracellular trafficking of seed storage proteins to the protein storage vacuoles (PSVs). Participates in the transport of the proglutelins from the Golgi apparatus to the PSVs in endosperm. Functions cooperatively with VPS9A to regulate post-Golgi dense vesicle-mediated transport of storage proteins to the type II protein bodies (PBII) protein storage vacuoles in developing endosperm. Involved in the maintenance of the general structural organization of the endomembrane system in developing endosperm. Binds GTP in vitro. Forms a quaternary complex with the two glutelin zipcode RNA-binding proteins RBP-L and RBP-P, and the membrane trafficking factor NSF. This quaternay complex carries glutelin mRNAs for active transport on endosomes to the cortical endoplasmic reticulum membrane, and enables endosome-mediated glutelin mRNA transport in endosperm cells. The protein is Ras-related protein Rab5A of Oryza sativa subsp. japonica (Rice).